Consider the following 664-residue polypeptide: MPSFKIVSDFALTGDQPQAVEKLAKGLVSGLTDQTLLGVTGSGKTFTMANVIARVNRPTLIISHNKTLAAQLYSEMKEFLPENSVEYFVSYYDYYQPEAYVPQKDMYIEKDSDINEEIDKLRHAATRALFERRDVVIVASVSCIYGLGEPEEYRSFVLPLKKGQSFRRDLILRRLVDMQYERNDLDFSRGKFRLRGDTLEIQPAYEELALRVEFFGDEIERIVSLDPVSGELLAGIEEINIYPAKHFVTSAEKMAEAIKSIQAELEDRLKELEAEGKMLEAARLKQRTNYDLEMMEQAGYCSGVENYSRHLAGRKAGSAPWTLLDYFPEDFLLIVDESHMSLPQIRGMYAGDSARKKTLVDYGFRLPSAMDNRPLSFDEFKARVKQAIYVSATPGPYEKEHSLQVVEQLVRPTGLLEPVMTVKPTVGQIDDLLEEVKKRVAKNERVLITTLTKKMSEKLADYLVEMGVKTHYLHSEVDTLERIEILRDLRLGVYDVIVGINLLREGLDLPEVSLVAILDADKEGYLRSEQALIQTMGRAARHVDGQVIMYADKITGSMQRAMDEIIRRRKIQEDYNRLHNITPQGIRKAIKDINERIRSVTAEVSGPEFRPTPTLREDIARLIKELESQMKKAAKNLEFERAALIRDRVVELRAALEIDPLGRK.

Residues 25-412 (KGLVSGLTDQ…LQVVEQLVRP (388 aa)) enclose the Helicase ATP-binding domain. 38–45 (GVTGSGKT) serves as a coordination point for ATP. The Beta-hairpin signature appears at 91-114 (YYDYYQPEAYVPQKDMYIEKDSDI). The Helicase C-terminal domain maps to 428 to 594 (QIDDLLEEVK…GIRKAIKDIN (167 aa)). Positions 620–655 (ARLIKELESQMKKAAKNLEFERAALIRDRVVELRAA) constitute a UVR domain.

Belongs to the UvrB family. As to quaternary structure, forms a heterotetramer with UvrA during the search for lesions. Interacts with UvrC in an incision complex.

The protein resides in the cytoplasm. Its function is as follows. The UvrABC repair system catalyzes the recognition and processing of DNA lesions. A damage recognition complex composed of 2 UvrA and 2 UvrB subunits scans DNA for abnormalities. Upon binding of the UvrA(2)B(2) complex to a putative damaged site, the DNA wraps around one UvrB monomer. DNA wrap is dependent on ATP binding by UvrB and probably causes local melting of the DNA helix, facilitating insertion of UvrB beta-hairpin between the DNA strands. Then UvrB probes one DNA strand for the presence of a lesion. If a lesion is found the UvrA subunits dissociate and the UvrB-DNA preincision complex is formed. This complex is subsequently bound by UvrC and the second UvrB is released. If no lesion is found, the DNA wraps around the other UvrB subunit that will check the other stand for damage. This is UvrABC system protein B from Dehalococcoides mccartyi (strain CBDB1).